The sequence spans 77 residues: Conotoxin ArMKLT2-0251 (77 aa).

A signal peptide spans Met-1 to Ala-22. The propeptide occupies Asp-23–Met-46. Pyrrolidone carboxylic acid is present on Gln-49. 3 disulfides stabilise this stretch: Cys-50-Cys-65, Cys-57-Cys-68, and Cys-64-Cys-73.

This sequence belongs to the conotoxin O1 superfamily. Expressed by the venom duct.

Its subcellular location is the secreted. This chain is Conotoxin ArMKLT2-0251, found in Conus arenatus (Sand-dusted cone).